We begin with the raw amino-acid sequence, 100 residues long: Large ribosomal subunit protein bL21 (100 aa).

The protein belongs to the bacterial ribosomal protein bL21 family. As to quaternary structure, part of the 50S ribosomal subunit. Contacts protein L20.

Functionally, this protein binds to 23S rRNA in the presence of protein L20. This Mycoplasmopsis synoviae (strain 53) (Mycoplasma synoviae) protein is Large ribosomal subunit protein bL21.